The chain runs to 307 residues: Homoserine O-acetyltransferase (307 aa).

Cys-142 serves as the catalytic Acyl-thioester intermediate. Positions 163 and 192 each coordinate substrate. His-235 (proton acceptor) is an active-site residue. Residue Glu-237 is part of the active site. Position 249 (Arg-249) interacts with substrate.

The protein belongs to the MetA family.

It localises to the cytoplasm. The enzyme catalyses L-homoserine + acetyl-CoA = O-acetyl-L-homoserine + CoA. It participates in amino-acid biosynthesis; L-methionine biosynthesis via de novo pathway; O-acetyl-L-homoserine from L-homoserine: step 1/1. In terms of biological role, transfers an acetyl group from acetyl-CoA to L-homoserine, forming acetyl-L-homoserine. This chain is Homoserine O-acetyltransferase, found in Rhizobium leguminosarum bv. trifolii (strain WSM2304).